A 490-amino-acid chain; its full sequence is Glutathione hydrolase 6 (490 aa).

Over 1-52 the chain is Cytoplasmic; it reads MEPEAGPVLYQKLRVWEPSLESEEEEEEISEQLILDASGPHDSSGNKAGRLP. Residues 53-73 traverse the membrane as a helical; Signal-anchor for type II membrane protein segment; sequence GAWAQLVAALLLLAIGFSLAV. At 74 to 490 the chain is on the extracellular side; it reads RQLCSSGASP…PSGCCPFQGF (417 aa). N-linked (GlcNAc...) asparagine glycosylation is found at N160, N165, and N374.

Belongs to the gamma-glutamyltransferase family. In terms of assembly, heterodimer composed of the light and heavy chains. The active site is located in the light chain. Post-translationally, cleaved by autocatalysis into a large and a small subunit and the autocatalytic cleavage is essential to the functional activation of the enzyme.

The protein resides in the membrane. It carries out the reaction an N-terminal (5-L-glutamyl)-[peptide] + an alpha-amino acid = 5-L-glutamyl amino acid + an N-terminal L-alpha-aminoacyl-[peptide]. The catalysed reaction is glutathione + H2O = L-cysteinylglycine + L-glutamate. The enzyme catalyses an S-substituted glutathione + H2O = an S-substituted L-cysteinylglycine + L-glutamate. Its pathway is sulfur metabolism; glutathione metabolism. Its function is as follows. Hydrolyzes and transfers gamma-glutamyl moieties from glutathione and other gamma-glutamyl compounds to acceptors. This Bos taurus (Bovine) protein is Glutathione hydrolase 6.